The following is a 228-amino-acid chain: 2-C-methyl-D-erythritol 4-phosphate cytidylyltransferase (228 aa).

Belongs to the IspD/TarI cytidylyltransferase family. IspD subfamily.

It carries out the reaction 2-C-methyl-D-erythritol 4-phosphate + CTP + H(+) = 4-CDP-2-C-methyl-D-erythritol + diphosphate. The protein operates within isoprenoid biosynthesis; isopentenyl diphosphate biosynthesis via DXP pathway; isopentenyl diphosphate from 1-deoxy-D-xylulose 5-phosphate: step 2/6. In terms of biological role, catalyzes the formation of 4-diphosphocytidyl-2-C-methyl-D-erythritol from CTP and 2-C-methyl-D-erythritol 4-phosphate (MEP). In Halalkalibacterium halodurans (strain ATCC BAA-125 / DSM 18197 / FERM 7344 / JCM 9153 / C-125) (Bacillus halodurans), this protein is 2-C-methyl-D-erythritol 4-phosphate cytidylyltransferase.